Here is a 180-residue protein sequence, read N- to C-terminus: ADP-ribosylation factor 5 (180 aa).

A lipid anchor (N-myristoyl glycine) is attached at Gly-2. Residues 24–31 (GLDAAGKT), 67–71 (DVGGQ), and 126–129 (NKQD) contribute to the GTP site.

Belongs to the small GTPase superfamily. Arf family. In terms of assembly, interacts (when activated) with GGA1, GGA2 and GGA3; the interaction is required for proper subcellular location of GGA1, GGA2 and GGA3. Binds ASAP2. Interacts with NCS1/FREQ at the Golgi complex. Interacts with RAB11FIP3 and RAB11FIP4.

Its subcellular location is the golgi apparatus. The protein resides in the cytoplasm. It is found in the perinuclear region. The protein localises to the membrane. It localises to the trans-Golgi network membrane. Its function is as follows. GTP-binding protein involved in protein trafficking; may modulate vesicle budding and uncoating within the Golgi apparatus. In terms of biological role, (Microbial infection) Functions as an allosteric activator of the cholera toxin catalytic subunit, an ADP-ribosyltransferase. This chain is ADP-ribosylation factor 5 (ARF5), found in Homo sapiens (Human).